The sequence spans 535 residues: GMP synthase [glutamine-hydrolyzing] (535 aa).

The Glutamine amidotransferase type-1 domain maps to 20–210 (PVLVVDFGAQ…LHRCAALPND (191 aa)). Cys97 serves as the catalytic Nucleophile. Active-site residues include His184 and Glu186. Residues 211-409 (WDASSIIEDQ…LGLPDEIVWR (199 aa)) form the GMPS ATP-PPase domain. 238–244 (SGGVDSA) lines the ATP pocket.

As to quaternary structure, homodimer.

The enzyme catalyses XMP + L-glutamine + ATP + H2O = GMP + L-glutamate + AMP + diphosphate + 2 H(+). Its pathway is purine metabolism; GMP biosynthesis; GMP from XMP (L-Gln route): step 1/1. Functionally, catalyzes the synthesis of GMP from XMP. The sequence is that of GMP synthase [glutamine-hydrolyzing] from Bifidobacterium longum (strain NCC 2705).